A 116-amino-acid polypeptide reads, in one-letter code: Iron-sulfur cluster insertion protein ErpA (116 aa).

Iron-sulfur cluster contacts are provided by Cys-44, Cys-108, and Cys-110.

The protein belongs to the HesB/IscA family. Homodimer. The cofactor is iron-sulfur cluster.

Its function is as follows. Required for insertion of 4Fe-4S clusters for at least IspG. In Shewanella loihica (strain ATCC BAA-1088 / PV-4), this protein is Iron-sulfur cluster insertion protein ErpA.